The following is a 315-amino-acid chain: Probable mannose-6-phosphate isomerase GmuF (315 aa).

Q95, H97, E115, and H172 together coordinate Zn(2+). R192 is a catalytic residue.

Belongs to the mannose-6-phosphate isomerase type 1 family. Requires Zn(2+) as cofactor.

It carries out the reaction D-mannose 6-phosphate = D-fructose 6-phosphate. Its function is as follows. Seems to be involved in the degradation of glucomannan. The sequence is that of Probable mannose-6-phosphate isomerase GmuF (gmuF) from Bacillus subtilis (strain 168).